The following is a 182-amino-acid chain: ATP-dependent protease subunit HslV (182 aa).

Residue threonine 12 is part of the active site. Residues alanine 167, cysteine 170, and threonine 173 each contribute to the Na(+) site.

This sequence belongs to the peptidase T1B family. HslV subfamily. A double ring-shaped homohexamer of HslV is capped on each side by a ring-shaped HslU homohexamer. The assembly of the HslU/HslV complex is dependent on binding of ATP.

The protein localises to the cytoplasm. It catalyses the reaction ATP-dependent cleavage of peptide bonds with broad specificity.. Allosterically activated by HslU binding. Protease subunit of a proteasome-like degradation complex believed to be a general protein degrading machinery. The chain is ATP-dependent protease subunit HslV from Chlorobium luteolum (strain DSM 273 / BCRC 81028 / 2530) (Pelodictyon luteolum).